A 139-amino-acid chain; its full sequence is uncharacterized protein (139 aa).

The next 3 membrane-spanning stretches (helical) occupy residues 38–60 (YFLHRMVVCLGVLLCAASLLYVF), 72–94 (FIILRSCVGCSVLLVVACLCAGS), and 114–136 (ITVVALLFGMGALVFNTVVLIVA).

It is found in the cell membrane. This is an uncharacterized protein from Treponema pallidum (strain Nichols).